Reading from the N-terminus, the 71-residue chain is Large ribosomal subunit protein bL31 (71 aa).

Zn(2+)-binding residues include C16, C18, C36, and C39.

Belongs to the bacterial ribosomal protein bL31 family. Type A subfamily. Part of the 50S ribosomal subunit. Zn(2+) serves as cofactor.

In terms of biological role, binds the 23S rRNA. This Thermus thermophilus (strain ATCC BAA-163 / DSM 7039 / HB27) protein is Large ribosomal subunit protein bL31.